The primary structure comprises 209 residues: Outer-membrane lipoprotein carrier protein (209 aa).

An N-terminal signal peptide occupies residues 1-21 (MHRQLRYAVLATALFASTAFA).

This sequence belongs to the LolA family. Monomer.

The protein localises to the periplasm. Functionally, participates in the translocation of lipoproteins from the inner membrane to the outer membrane. Only forms a complex with a lipoprotein if the residue after the N-terminal Cys is not an aspartate (The Asp acts as a targeting signal to indicate that the lipoprotein should stay in the inner membrane). In Xanthomonas campestris pv. campestris (strain 8004), this protein is Outer-membrane lipoprotein carrier protein.